The sequence spans 970 residues: UvrABC system protein A (970 aa).

34–41 is an ATP binding site; sequence GVSGSGKS. Residues 284-311 form a C4-type zinc finger; sequence CPEHGAVMDELSPRLFSFNSPYGACPDC. ABC transporter domains lie at 340–617 and 637–965; these read WSEK…QRSL and GNGA…KYLA. Residue 669–676 participates in ATP binding; sequence GVSGSGKS. The C4-type zinc finger occupies 768 to 794; sequence CEACAGQGVNVIEMNFLPDVYVQCDVC.

It belongs to the ABC transporter superfamily. UvrA family. Forms a heterotetramer with UvrB during the search for lesions.

Its subcellular location is the cytoplasm. Its function is as follows. The UvrABC repair system catalyzes the recognition and processing of DNA lesions. UvrA is an ATPase and a DNA-binding protein. A damage recognition complex composed of 2 UvrA and 2 UvrB subunits scans DNA for abnormalities. When the presence of a lesion has been verified by UvrB, the UvrA molecules dissociate. The chain is UvrABC system protein A from Synechocystis sp. (strain ATCC 27184 / PCC 6803 / Kazusa).